We begin with the raw amino-acid sequence, 432 residues long: tRNA(Ile)-lysidine synthase (432 aa).

ATP is bound at residue 19 to 24; that stretch reads STGIDS.

The protein belongs to the tRNA(Ile)-lysidine synthase family.

Its subcellular location is the cytoplasm. The enzyme catalyses cytidine(34) in tRNA(Ile2) + L-lysine + ATP = lysidine(34) in tRNA(Ile2) + AMP + diphosphate + H(+). Ligates lysine onto the cytidine present at position 34 of the AUA codon-specific tRNA(Ile) that contains the anticodon CAU, in an ATP-dependent manner. Cytidine is converted to lysidine, thus changing the amino acid specificity of the tRNA from methionine to isoleucine. In Staphylococcus epidermidis (strain ATCC 35984 / DSM 28319 / BCRC 17069 / CCUG 31568 / BM 3577 / RP62A), this protein is tRNA(Ile)-lysidine synthase.